Here is a 254-residue protein sequence, read N- to C-terminus: Triosephosphate isomerase 2 (254 aa).

9 to 11 (NMK) contacts substrate. Histidine 96 (electrophile) is an active-site residue. Catalysis depends on glutamate 168, which acts as the Proton acceptor. Residues glycine 174 and serine 212 each contribute to the substrate site.

It belongs to the triosephosphate isomerase family. Homodimer.

It is found in the cytoplasm. It catalyses the reaction D-glyceraldehyde 3-phosphate = dihydroxyacetone phosphate. The protein operates within polyol metabolism; glycerol degradation. Involved in the glycerol metabolism. Catalyzes stereospecifically the conversion of dihydroxyacetone phosphate (DHAP) to D-glyceraldehyde-3-phosphate (G3P). The polypeptide is Triosephosphate isomerase 2 (Listeria innocua serovar 6a (strain ATCC BAA-680 / CLIP 11262)).